The chain runs to 222 residues: UPF0173 metal-dependent hydrolase Nther_2337 (222 aa).

It belongs to the UPF0173 family.

The polypeptide is UPF0173 metal-dependent hydrolase Nther_2337 (Natranaerobius thermophilus (strain ATCC BAA-1301 / DSM 18059 / JW/NM-WN-LF)).